Here is a 743-residue protein sequence, read N- to C-terminus: GTPase-activating protein gyp7 (743 aa).

One can recognise a Rab-GAP TBC domain in the interval Gly-411–Tyr-633.

It is found in the cytoplasm. Its subcellular location is the nucleus. Its function is as follows. Most effectively accelerates the intrinsic GTPase activity of ypt7. In Schizosaccharomyces pombe (strain 972 / ATCC 24843) (Fission yeast), this protein is GTPase-activating protein gyp7.